Reading from the N-terminus, the 212-residue chain is Pyrrolidone-carboxylate peptidase (212 aa).

Catalysis depends on residues Glu78, Cys141, and His165.

This sequence belongs to the peptidase C15 family. In terms of assembly, homotetramer.

Its subcellular location is the cytoplasm. It catalyses the reaction Release of an N-terminal pyroglutamyl group from a polypeptide, the second amino acid generally not being Pro.. Removes 5-oxoproline from various penultimate amino acid residues except L-proline. In Staphylococcus haemolyticus (strain JCSC1435), this protein is Pyrrolidone-carboxylate peptidase.